A 249-amino-acid chain; its full sequence is ATP synthase subunit a (249 aa).

The next 6 membrane-spanning stretches (helical) occupy residues 30 to 50 (QSPVMMIVASVLVLAFLYVGM), 86 to 106 (FFPFIFTLFFFILAGNYLGLL), 115 to 135 (HIAVTLALALLVFVLAVIVSL), 142 to 162 (FFAHFMPAGAPVALAPLLVPI), 191 to 211 (MFAAFTIMLAGLGLFGDVLAV), and 218 to 238 (VALMALELLVGALQAYVFAIL).

It belongs to the ATPase A chain family. F-type ATPases have 2 components, CF(1) - the catalytic core - and CF(0) - the membrane proton channel. CF(1) has five subunits: alpha(3), beta(3), gamma(1), delta(1), epsilon(1). CF(0) has three main subunits: a(1), b(2) and c(9-12). The alpha and beta chains form an alternating ring which encloses part of the gamma chain. CF(1) is attached to CF(0) by a central stalk formed by the gamma and epsilon chains, while a peripheral stalk is formed by the delta and b chains.

Its subcellular location is the cell inner membrane. Its function is as follows. Key component of the proton channel; it plays a direct role in the translocation of protons across the membrane. In Gluconacetobacter diazotrophicus (strain ATCC 49037 / DSM 5601 / CCUG 37298 / CIP 103539 / LMG 7603 / PAl5), this protein is ATP synthase subunit a.